The following is a 205-amino-acid chain: Holliday junction branch migration complex subunit RuvA (205 aa).

The interval 1 to 64 (MIGRLRGVLV…EDAQLLYGFI (64 aa)) is domain I. Residues 65–143 (TKQERALFRL…SLLETSAGSE (79 aa)) form a domain II region. The tract at residues 144–156 (REFMLKSNYTPAP) is flexible linker. The tract at residues 157-205 (VVNTAEEDAIAALLSLGYKPAQASKAVSAAFKEGMSSEDLIKSSLKSML) is domain III.

Belongs to the RuvA family. As to quaternary structure, homotetramer. Forms an RuvA(8)-RuvB(12)-Holliday junction (HJ) complex. HJ DNA is sandwiched between 2 RuvA tetramers; dsDNA enters through RuvA and exits via RuvB. An RuvB hexamer assembles on each DNA strand where it exits the tetramer. Each RuvB hexamer is contacted by two RuvA subunits (via domain III) on 2 adjacent RuvB subunits; this complex drives branch migration. In the full resolvosome a probable DNA-RuvA(4)-RuvB(12)-RuvC(2) complex forms which resolves the HJ.

The protein resides in the cytoplasm. In terms of biological role, the RuvA-RuvB-RuvC complex processes Holliday junction (HJ) DNA during genetic recombination and DNA repair, while the RuvA-RuvB complex plays an important role in the rescue of blocked DNA replication forks via replication fork reversal (RFR). RuvA specifically binds to HJ cruciform DNA, conferring on it an open structure. The RuvB hexamer acts as an ATP-dependent pump, pulling dsDNA into and through the RuvAB complex. HJ branch migration allows RuvC to scan DNA until it finds its consensus sequence, where it cleaves and resolves the cruciform DNA. This Shewanella woodyi (strain ATCC 51908 / MS32) protein is Holliday junction branch migration complex subunit RuvA.